A 117-amino-acid chain; its full sequence is Protein Wnt-6 (117 aa).

Residue Ser-1 is the site of O-palmitoleoyl serine; by PORCN attachment. Cys-83 and Cys-98 form a disulfide bridge. Residue Asn-84 is glycosylated (N-linked (GlcNAc...) asparagine).

The protein belongs to the Wnt family. In terms of processing, palmitoleoylation is required for efficient binding to frizzled receptors. Depalmitoleoylation leads to Wnt signaling pathway inhibition.

It is found in the secreted. It localises to the extracellular space. The protein localises to the extracellular matrix. Its function is as follows. Ligand for members of the frizzled family of seven transmembrane receptors. Probable developmental protein. May be a signaling molecule which affects the development of discrete regions of tissues. Is likely to signal over only few cell diameters. The protein is Protein Wnt-6 (WNT-6) of Strongylocentrotus purpuratus (Purple sea urchin).